The primary structure comprises 177 residues: UPF0114 protein HP_0189 (177 aa).

Helical transmembrane passes span 15-35 (WLLAPLCIAMSLVLVVLGYVF), 54-74 (LVLSALGLVDLLFMAGLVLMV), and 145-165 (PIFWQVVIHLVFVCSALLAAV).

It belongs to the UPF0114 family.

The protein resides in the cell membrane. In Helicobacter pylori (strain ATCC 700392 / 26695) (Campylobacter pylori), this protein is UPF0114 protein HP_0189.